Reading from the N-terminus, the 291-residue chain is Phosphatidylserine decarboxylase proenzyme (291 aa).

Catalysis depends on charge relay system; for autoendoproteolytic cleavage activity residues Asp93, His150, and Ser253. The active-site Schiff-base intermediate with substrate; via pyruvic acid; for decarboxylase activity is Ser253. Ser253 is modified (pyruvic acid (Ser); by autocatalysis).

This sequence belongs to the phosphatidylserine decarboxylase family. PSD-B subfamily. Prokaryotic type I sub-subfamily. Heterodimer of a large membrane-associated beta subunit and a small pyruvoyl-containing alpha subunit. Pyruvate serves as cofactor. Post-translationally, is synthesized initially as an inactive proenzyme. Formation of the active enzyme involves a self-maturation process in which the active site pyruvoyl group is generated from an internal serine residue via an autocatalytic post-translational modification. Two non-identical subunits are generated from the proenzyme in this reaction, and the pyruvate is formed at the N-terminus of the alpha chain, which is derived from the carboxyl end of the proenzyme. The autoendoproteolytic cleavage occurs by a canonical serine protease mechanism, in which the side chain hydroxyl group of the serine supplies its oxygen atom to form the C-terminus of the beta chain, while the remainder of the serine residue undergoes an oxidative deamination to produce ammonia and the pyruvoyl prosthetic group on the alpha chain. During this reaction, the Ser that is part of the protease active site of the proenzyme becomes the pyruvoyl prosthetic group, which constitutes an essential element of the active site of the mature decarboxylase.

The protein localises to the cell membrane. The catalysed reaction is a 1,2-diacyl-sn-glycero-3-phospho-L-serine + H(+) = a 1,2-diacyl-sn-glycero-3-phosphoethanolamine + CO2. It participates in phospholipid metabolism; phosphatidylethanolamine biosynthesis; phosphatidylethanolamine from CDP-diacylglycerol: step 2/2. In terms of biological role, catalyzes the formation of phosphatidylethanolamine (PtdEtn) from phosphatidylserine (PtdSer). This chain is Phosphatidylserine decarboxylase proenzyme, found in Alcanivorax borkumensis (strain ATCC 700651 / DSM 11573 / NCIMB 13689 / SK2).